Here is a 229-residue protein sequence, read N- to C-terminus: UPF0758 protein Mbar_A2303 (229 aa).

The 123-residue stretch at 106-228 (KVCSPKDVYT…YVSLKDEGFV (123 aa)) folds into the MPN domain. Zn(2+) contacts are provided by H177, H179, and D190. The short motif at 177-190 (HNHPSGDPSPSRED) is the JAMM motif element.

Belongs to the UPF0758 family.

In Methanosarcina barkeri (strain Fusaro / DSM 804), this protein is UPF0758 protein Mbar_A2303.